Consider the following 425-residue polypeptide: Lipoyl synthase, mitochondrial (425 aa).

A mitochondrion-targeting transit peptide spans 1–33 (MAASSTRLRCLYASSSTWKTSPSQSLISLSRRY). Positions 17–55 (TWKTSPSQSLISLSRRYATTSSAPPTPSDESSSTLPKRR) are disordered. A compositionally biased stretch (polar residues) spans 33 to 51 (YATTSSAPPTPSDESSSTL). Residues C142, C147, C153, C173, C177, C180, and S388 each contribute to the [4Fe-4S] cluster site. A Radical SAM core domain is found at 156–377 (GSDKSAATAT…RQRALEMGFL (222 aa)).

Belongs to the radical SAM superfamily. Lipoyl synthase family. [4Fe-4S] cluster serves as cofactor.

The protein localises to the mitochondrion. The catalysed reaction is [[Fe-S] cluster scaffold protein carrying a second [4Fe-4S](2+) cluster] + N(6)-octanoyl-L-lysyl-[protein] + 2 oxidized [2Fe-2S]-[ferredoxin] + 2 S-adenosyl-L-methionine + 4 H(+) = [[Fe-S] cluster scaffold protein] + N(6)-[(R)-dihydrolipoyl]-L-lysyl-[protein] + 4 Fe(3+) + 2 hydrogen sulfide + 2 5'-deoxyadenosine + 2 L-methionine + 2 reduced [2Fe-2S]-[ferredoxin]. The protein operates within protein modification; protein lipoylation via endogenous pathway; protein N(6)-(lipoyl)lysine from octanoyl-[acyl-carrier-protein]: step 2/2. Functionally, catalyzes the radical-mediated insertion of two sulfur atoms into the C-6 and C-8 positions of the octanoyl moiety bound to the lipoyl domains of lipoate-dependent enzymes, thereby converting the octanoylated domains into lipoylated derivatives. This Talaromyces marneffei (strain ATCC 18224 / CBS 334.59 / QM 7333) (Penicillium marneffei) protein is Lipoyl synthase, mitochondrial.